The primary structure comprises 345 residues: rRNA 2'-O-methyltransferase fibrillarin (345 aa).

A disordered region spans residues 1-114 (MGKPGFSPRG…GFKGGKTVTI (114 aa)). Residues 8–108 (PRGGGGGGGG…RGGGAGGFKG (101 aa)) show a composition bias toward gly residues. Asymmetric dimethylarginine occurs at positions 9, 23, 25, 41, 43, 49, 52, 59, 64, 72, 78, 84, 89, 94, and 99. Residues 198–199 (TT), 217–218 (EF), 242–243 (DA), and 262–265 (DVAQ) contribute to the S-adenosyl-L-methionine site.

It belongs to the methyltransferase superfamily. Fibrillarin family. In terms of assembly, component of box C/D small nucleolar ribonucleoprotein (snoRNP) particles. It is associated with the U3, U8 and U13 small nuclear RNAs. In terms of processing, by homology to other fibrillarins, some or all of the N-terminal domain arginines are modified to asymmetric dimethylarginine (DMA).

Its subcellular location is the nucleus. The protein resides in the nucleolus. The enzyme catalyses L-glutaminyl-[histone H2A] + S-adenosyl-L-methionine = N(5)-methyl-L-glutaminyl-[histone H2A] + S-adenosyl-L-homocysteine + H(+). In terms of biological role, S-adenosyl-L-methionine-dependent methyltransferase that has the ability to methylate both RNAs and proteins. Involved in pre-rRNA processing. Utilizes the methyl donor S-adenosyl-L-methionine to catalyze the site-specific 2'-hydroxyl methylation of ribose moieties in pre-ribosomal RNA. Site specificity is provided by a guide RNA that base pairs with the substrate. Methylation occurs at a characteristic distance from the sequence involved in base pairing with the guide RNA. Also acts as a protein methyltransferase by mediating methylation of 'Gln-105' of histone H2A (H2AQ105me), a modification that impairs binding of the FACT complex and is specifically present at 35S ribosomal DNA locus. This Drosophila erecta (Fruit fly) protein is rRNA 2'-O-methyltransferase fibrillarin.